A 504-amino-acid polypeptide reads, in one-letter code: Cytochrome P450 6B7 (504 aa).

C445 is a binding site for heme.

It belongs to the cytochrome P450 family. Heme is required as a cofactor.

It localises to the endoplasmic reticulum membrane. It is found in the microsome membrane. The catalysed reaction is an organic molecule + reduced [NADPH--hemoprotein reductase] + O2 = an alcohol + oxidized [NADPH--hemoprotein reductase] + H2O + H(+). This chain is Cytochrome P450 6B7 (CYP6B7), found in Helicoverpa armigera (Cotton bollworm).